Here is a 530-residue protein sequence, read N- to C-terminus: MAAPAACTRFSDNYDIKEELGKGAFSIVKRCVQKSTGFEFAAKIINTKKLTARDFQKLEREARICRKLHHPNIVRLHDSIQEENYHYLVFDLVTGGELFEDIVAREFYSEADASHCIQQILESVNHCHQNGVVHRDLKPENLLLASKAKGAAVKLADFGLAIEVQGDHQAWFGFAGTPGYLSPEVLKKEPYGKSVDIWACGVILYILLVGYPPFWDEDQHRLYSQIKAGAYDYPSPEWDTVTPEAKNLINQMLTVNPNKRITAAEALKHPWICQRERVASVVHRQETVDCLKKFNARRKLKGAILTTMLATRNFSSRSMITKKGEGSQVKESTDSSSTTLEDDDIKEDKKGTVDRSTTVVSKEPEDIRILCPAKTYQQNIGNSQCSSARRQEIIKITEQLIEAINSGDFDGYTKICDPHLTAFEPEALGNLVEGIDFHKFYFENVLGKNCKAINTTILNPHVHLLGEEAACIAYVRLTQYIDKQGHAHTHQSEETRVWHKRDNKWQNVHFHRSASAKISGATTFDFIPQK.

Residues 12-272 (DNYDIKEELG…AAEALKHPWI (261 aa)) enclose the Protein kinase domain. ATP-binding positions include 20–28 (LGKGAFSIV) and Lys43. Asp136 functions as the Proton acceptor in the catalytic mechanism. A Phosphothreonine; by autocatalysis modification is found at Thr287. The calmodulin-binding stretch occupies residues 291 to 301 (LKKFNARRKLK). Residues Thr306 and Thr307 each carry the phosphothreonine; by autocatalysis modification. Residues 320 to 358 (ITKKGEGSQVKESTDSSSTTLEDDDIKEDKKGTVDRSTT) are disordered. Ser327 is subject to Phosphoserine.

The protein belongs to the protein kinase superfamily. CAMK Ser/Thr protein kinase family. CaMK subfamily. As to quaternary structure, interacts with CASK. In terms of processing, autophosphorylation at Thr-287 is independent of autophosphorylation at Thr-306 and Thr-307. In terms of tissue distribution, expressed at a high level in the central nervous system during the late embryonic stage. In adults, expression is more abundant in the head than in the body.

It catalyses the reaction L-seryl-[protein] + ATP = O-phospho-L-seryl-[protein] + ADP + H(+). The enzyme catalyses L-threonyl-[protein] + ATP = O-phospho-L-threonyl-[protein] + ADP + H(+). Its activity is regulated as follows. CASK plays a role in regulation of CaMKII autophosphorylation. When complexed with CASK and in the presence Ca[2+]/CaM, autophosphorylation of Thr-287 causes constitutive activation of the kinase. In the absence of Ca[2+]/CaM, autophosphorylation of Thr-306 causes inactivation of the kinase. Its function is as follows. A key regulator of plasticity in synaptic physiology and behavior, alterations in its activity produce pleiotrophic effects that involve synaptic transmission and development as well as various aspects of behavior. Directly modulates eag potassium channels. The polypeptide is Calcium/calmodulin-dependent protein kinase type II alpha chain (CaMKII) (Drosophila melanogaster (Fruit fly)).